The chain runs to 367 residues: Serine/threonine-protein kinase Sgk2 (367 aa).

The tract at residues 1–26 is disordered; sequence MNSSPAGTPSPQPSRANGNINLGPSA. Position 10 is a phosphoserine (Ser10). A Protein kinase domain is found at 35 to 292; sequence FDFLKVIGKG…FLEIKNHVFF (258 aa). Residues 41–49 and Lys64 each bind ATP; that span reads IGKGNYGKV. The Nuclear localization signal motif lies at 68–78; that stretch reads KKSILKKKEQS. Asp159 functions as the Proton acceptor in the catalytic mechanism. Phosphothreonine; by PDPK1 is present on Thr193. The 75-residue stretch at 293 to 367 folds into the AGC-kinase C-terminal domain; it reads SPINWDDLYH…APEDDDILDC (75 aa). Residues Ser334 and Ser356 each carry the phosphoserine modification. Position 357 is a phosphotyrosine (Tyr357).

It belongs to the protein kinase superfamily. AGC Ser/Thr protein kinase family. Post-translationally, activated by phosphorylation on Ser-356 by an unknown kinase (may be mTORC2 but not confirmed), transforming it into a substrate for PDPK1 which then phosphorylates it on Thr-193. In terms of tissue distribution, highly expressed in liver, kidney and pancreas, and at lower levels in brain.

Its subcellular location is the cytoplasm. It is found in the nucleus. The catalysed reaction is L-seryl-[protein] + ATP = O-phospho-L-seryl-[protein] + ADP + H(+). It carries out the reaction L-threonyl-[protein] + ATP = O-phospho-L-threonyl-[protein] + ADP + H(+). Its activity is regulated as follows. Two specific sites, one in the kinase domain (Thr-193) and the other in the C-terminal regulatory region (Ser-356), need to be phosphorylated for its full activation. Serine/threonine-protein kinase which is involved in the regulation of a wide variety of ion channels, membrane transporters, cell growth, survival and proliferation. Up-regulates Na(+) channels: SCNN1A/ENAC, K(+) channels: KCNA3/Kv1.3, KCNE1 and KCNQ1, amino acid transporter: SLC6A19, glutamate transporter: SLC1A6/EAAT4, glutamate receptors: GRIA1/GLUR1 and GRIK2/GLUR6, Na(+)/H(+) exchanger: SLC9A3/NHE3, and the Na(+)/K(+) ATPase. This chain is Serine/threonine-protein kinase Sgk2 (SGK2), found in Homo sapiens (Human).